The following is a 444-amino-acid chain: uncharacterized protein (444 aa).

Residues 1-11 (MASSAGRDKLR) are compositionally biased toward basic and acidic residues. Residues 1-35 (MASSAGRDKLRSRGQRVFAFGSSTPRDLSHMSKVP) are disordered.

This is an uncharacterized protein from Caenorhabditis elegans.